A 263-amino-acid polypeptide reads, in one-letter code: Putative inactive caspase B (263 aa).

The propeptide at 1–8 (MMCEDASD) is removed in mature form by cps-1 or ced-3.

This sequence belongs to the peptidase C14A family. As to quaternary structure, interacts with ced-3 (via large subunit p17 or small subunit p13); the interaction inhibits ced-3 autoactivation. Cleavage by csp-1 isoform b or ced-3 removes the propeptide and generates subunit p31 in vitro. An additional cleavage at Asp-149 generates the 2 subunits p17 and p14 but this cleavage appears to be less efficient. As to expression, specifically expressed in the hermaphrodite germline.

Its subcellular location is the cytoplasm. Functionally, putative inactive caspase. In the germline, binds caspase ced-3 zymogen and prevents ced-3 autoactivation. Does not affect the caspase activity of mature ced-3 and ced-4-mediated mature ced-3 activation. Negatively regulates germline apoptosis by inhibiting autocleavage of caspase ced-3. Involved in fertility. Putative inactive caspase. Dispensable for the inhibition of germline apoptosis. The chain is Putative inactive caspase B from Caenorhabditis elegans.